The chain runs to 1275 residues: MAIVKRGARSKAKQEAPAKSGIKKAEFDLHKKKEVGVSDLTLLSKISDDSINDNLHKRFMNNTIYTYIGHVLISVNPFQDLGIYTKEYLNMYKGKNRLEVPPHVFAIAESMYYHLKSYGESQCVIISGESGAGKTEAAKQIMQYIANVSVDDKVSTTSEITQIKDMVLATNPLLESFGCAKTLRNNNSSRHGKYLEIYFNPSNYQPVAAHITNYLLEKQRVVSQITNERNFHIFYQLTKSCPPEYKQSFGLQGPETYVYTSAAKCIDVEGINDGKDFAETLQAMNTIGLSKAEQDNIFRSLASILWIGNISFVENEDGNAAIRDDTVTTFVAYLLEVDANVLKKSILERVIETSHGMRRGSTYHVPLNIVQATASRDALAKGIYNYLFDWIVERVNISLRGRAEAMEKKTIGILDIYGFEIFEHNSFEQICINYVNEKLQQIFIQLTLKAEQDEYVQEQIKWTPIDYFNNKVVCDLIEATRPQPGLFAALNDSIKTAHADSDAADQVFAQRLSMVGANNRHFEDRKGKFIIKHYAGDVVYDVAGMTDKNKDAMLRDLLEMLSTSQNTFVNSVLFPPDLLAVLTDKKKRPETASDKIKKSANLLVDTLSQCQPSYIRTIKPNQTKRPKEYDNAQVLHQVKYLGLKENVRIRRAGFAYRTTFDKFVQRFYLLSPKTGYAGDYIWNGDDISAVREILKSCHIPDTEFQMGTSKVFIKTPETLFAMEDMRDKYWHNMAARIQRAWRRYVKRKEDAARLIQNAWKVKKHGNQFEQLRDYGNGLLQGRKERRRMSMLGSRAFMGDYLGCNYSSGFGRFVLNQVGLNEHVVFSGKGEILLSKFGRSSKRLPRIFVLGRSSLYIIAENLVERRLQLSKEFVIPINSINYVGLSTFQDNWLAVSLHSPTPTTPDVLINLDFKTELVTHLKKLNPGLTIKIGPTIEYQKKPGKFHTVKFVRSDVSTIPIHGDVYKSGTVSVRPGLSPDSQNPKRPRATSSKVDYSKYYNRGGRLAPARTVPPAHPTSQQRTPVAPPSHATQQQPSYPTPVAPVHQQPNNHVRKVPPPAPSLNNNHQEAVTAATAAMNHVNIQQPATVVQNHNSNPTAPSRPAKKAAPAPPVKKTAPPPPPSLSAAKPKWPTFKANYDYDGSVSGSMALSANDIVYITQNNGQWSLAKSLDESKEGWVPTAYISECPPPSNLGGSKSPPPPPPPSATTRTVPEQGGNAAAAASTQQEGGLSNGLAGALLAKKNEETNLAGSIADALKKRSATRDSDDEEEDDDDDW.

The Myosin motor domain occupies 35-727; that stretch reads VGVSDLTLLS…TLFAMEDMRD (693 aa). Residue 128–135 participates in ATP binding; sequence GESGAGKT. Serine 361 is subject to Phosphoserine. The segment at 410 to 493 is actin-binding; the sequence is TIGILDIYGF…PGLFAALNDS (84 aa). 2 IQ domains span residues 731–751 and 752–777; these read HNMA…KEDA and ARLI…YGNG. The TH1 domain occupies 785-974; the sequence is RRRMSMLGSR…KSGTVSVRPG (190 aa). 4 disordered regions span residues 966 to 1064, 1089 to 1128, 1183 to 1230, and 1251 to 1275; these read SGTV…LNNN, QNHN…AKPK, SECP…GGLS, and IADA…DDDW. Residues 977–992 are compositionally biased toward polar residues; it reads PDSQNPKRPRATSSKV. The span at 1095–1106 shows a compositional bias: low complexity; sequence PTAPSRPAKKAA. Residues 1107–1121 show a composition bias toward pro residues; sequence PAPPVKKTAPPPPPS. Residues 1127 to 1187 form the SH3 domain; the sequence is PKWPTFKANY…PTAYISECPP (61 aa). Residues 1254 to 1263 show a composition bias toward basic and acidic residues; the sequence is ALKKRSATRD. The segment covering 1264-1275 has biased composition (acidic residues); sequence SDDEEEDDDDDW.

The protein belongs to the TRAFAC class myosin-kinesin ATPase superfamily. Myosin family. Post-translationally, phosphorylation of the TEDS site (Ser-361) is required for the polarization of the actin cytoskeleton. Phosphorylation probably activates the myosin-I ATPase activity.

It is found in the cytoplasm. The protein resides in the cytoskeleton. Its subcellular location is the actin patch. Type-I myosin implicated in the organization of the actin cytoskeleton. Required for proper actin cytoskeleton polarization. At the cell cortex, assembles in patch-like structures together with proteins from the actin-polymerizing machinery and promotes actin assembly. Functions as actin nucleation-promoting factor (NPF) for the Arp2/3 complex. This chain is Myosin-1 (MYO1), found in Meyerozyma guilliermondii (strain ATCC 6260 / CBS 566 / DSM 6381 / JCM 1539 / NBRC 10279 / NRRL Y-324) (Yeast).